A 61-amino-acid polypeptide reads, in one-letter code: Small ribosomal subunit protein uS14 (61 aa).

Residues Cys24, Cys27, Cys40, and Cys43 each coordinate Zn(2+).

It belongs to the universal ribosomal protein uS14 family. Zinc-binding uS14 subfamily. In terms of assembly, part of the 30S ribosomal subunit. Contacts proteins S3 and S10. The cofactor is Zn(2+).

Binds 16S rRNA, required for the assembly of 30S particles and may also be responsible for determining the conformation of the 16S rRNA at the A site. This is Small ribosomal subunit protein uS14 from Roseiflexus castenholzii (strain DSM 13941 / HLO8).